Consider the following 324-residue polypeptide: Viral cathepsin (324 aa).

A signal peptide spans 1 to 18 (MNKIVLYLLIYVGTFSAA). A propeptide spans 19-113 (YDLLKAPSYF…VVLNRPPDKG (95 aa)) (activation peptide). 3 disulfide bridges follow: Cys-134-Cys-175, Cys-168-Cys-208, and Cys-263-Cys-311. Cys-137 is a catalytic residue. Asn-159 is a glycosylation site (N-linked (GlcNAc...) asparagine; by host). Active-site residues include His-270 and Asn-290.

Belongs to the peptidase C1 family. Post-translationally, synthesized as an inactive proenzyme and activated by proteolytic removal of the inhibitory propeptide.

The enzyme catalyses Endopeptidase of broad specificity, hydrolyzing substrates of both cathepsin L and cathepsin B.. Cysteine protease that plays an essential role in host liquefaction to facilitate horizontal transmission of the virus. May participate in the degradation of foreign protein expressed by the baculovirus system. This chain is Viral cathepsin (Vcath), found in Choristoneura fumiferana defective polyhedrosis virus (Cfdef).